The chain runs to 233 residues: Protein DOUBLE-STRAND BREAK FORMATION (233 aa).

In terms of assembly, interacts with PRD1; this interaction facilitates a binding to PRD3. Specifically expressed in buds.

Required for meiotic double-strand break (DSB) formation, the initial event for meiotic recombination. The protein is Protein DOUBLE-STRAND BREAK FORMATION of Arabidopsis thaliana (Mouse-ear cress).